Reading from the N-terminus, the 778-residue chain is MVGMKVQHDGRLYSLDDERIVVYGGTLQYFRVPRNYWEDRLRKMKSHGLNTVETYIAWNWHEPQEGVFDFTGETHPQRDLIGFLELAQKLGLYVIIRPGPYICGEWKNGGIPDWLINSHPEILAKSPNGSFPRDVYYPPITYLHPTYLEYAMKWYEEVLPIIRDYLYSNGGSIISVTIDDEPSYWETIFQPFLTDYNEIIVRENGIWHSWLKENYSLGDLEERYGERFSDYTEIAPPKSFSEPLPKVLDWHHFKIWMINEYVRRLYEKIREYVDVPISLLDPYLLLAAWKEFYLYVTRHKLDIHLWTEFWYSFYRTFDFKEDKLGHLYFKTGIYRYYVSKLKTPPLSIETQASLANVIEKDEAELLYALLPALGIHNLNYYLYVGGENPRGYESHNGVTWDVYSPIGLDGRERQHVEPIKWIGEFLKSNIDFVDSQFKARVAFGMYEPYEALNLWGYKPESFEESVNLNEYLFGERGLLTLLAMSNVPFDVIDLEISTLEEMLQYEQIWVYSLDFMSREVQEKLIKYVEEGGNLVILPTLPYLDENMKPCTRLRDFLGVEVERAKARDNMRLIPYLSVDAEGIDRMVVRNVAREVKGGEAIAWIGDKVVGTIVRKGKGSAVILGFRLQYYSSYHDMHRKFVDKILQLQGVKREVEVSNRDIIAIPRIHYLVLVNPRDEEVAGKVKYRGVEFEIKMKGRGVLFIPVDVEINGVKLVYATATPIGGGNRRIKFRNHLSDTSEIAIRDGRIRGVKGGYVLQEKGERVYVIRHERETFEIEF.

Substrate-binding positions include Tyr55, 104-105, 180-181, Glu308, Glu349, and Tyr381; these read GE and DE. Glu181 serves as the catalytic Proton donor. Glu349 (nucleophile) is an active-site residue.

The protein belongs to the glycosyl hydrolase 35 family. In terms of assembly, homodimer.

The protein resides in the cytoplasm. The catalysed reaction is beta-D-glucosaminyl-(1-&gt;4)-N-acetyl-D-glucosamine + H2O = D-glucosamine + N-acetyl-D-glucosamine. The protein operates within glycan degradation; chitin degradation. Functionally, exo-type enzyme that specifically cleaves the non-reducing terminal glycosidic bond of chitooligosaccharides. Catalyzes the hydrolysis of GlcN-GlcNAc to glucosamine (GlcN) and N-acetylglucosamine (GlcNAc). Involved in chitin degradation. Can also hydrolyze chitosan and chitooligosaccharides of various chain lengths. This Pyrococcus horikoshii (strain ATCC 700860 / DSM 12428 / JCM 9974 / NBRC 100139 / OT-3) protein is Exo-beta-D-glucosaminidase.